A 1150-amino-acid chain; its full sequence is ATP-dependent DNA helicase Q-like 4B (1150 aa).

Disordered regions lie at residues 124 to 143 (TPAI…GSTF) and 154 to 179 (CAHN…FSSS). Residues 132–142 (TSRTSSTKGST) are compositionally biased toward low complexity. Positions 327–361 (DHVEQLHQKRLLLKKQIQQLEILIHNKERKKSQCL) form a coiled coil. The segment covering 416-428 (YDISSGSEEREQS) has biased composition (basic and acidic residues). Residues 416–446 (YDISSGSEEREQSVSEVIDVTDTESSNDKKW) are disordered. In terms of domain architecture, Helicase ATP-binding spans 478–653 (INATMSGCDV…VQALGLVNCV (176 aa)). Residue 491-498 (MPTGGGKS) participates in ATP binding. Residues 597–600 (DEAH) carry the DEAH box motif. Positions 678–823 (DIDKFIRENH…QMKMGYNCKA (146 aa)) constitute a Helicase C-terminal domain. The HRDC domain maps to 1029–1111 (SNLSGILLTA…DSTINDHYKT (83 aa)). A disordered region spans residues 1106 to 1150 (NDHYKTRPGSGKRRRDENVNPNVAEDDDPDWSASQSHKKVVKNKK). Basic residues predominate over residues 1141–1150 (SHKKVVKNKK).

It belongs to the helicase family. RecQ subfamily. Requires Mg(2+) as cofactor. It depends on Mn(2+) as a cofactor. As to expression, mostly expressed in roots, seedlings, shoots, shoot apical mersitem, flowers, and siliques.

It is found in the nucleus. The enzyme catalyses Couples ATP hydrolysis with the unwinding of duplex DNA by translocating in the 3'-5' direction.. It catalyses the reaction ATP + H2O = ADP + phosphate + H(+). Functionally, 3'-5' DNA helicase that may play a role in the repair of DNA. Required to promote but not to suppress crossovers. This is ATP-dependent DNA helicase Q-like 4B (RECQL4B) from Arabidopsis thaliana (Mouse-ear cress).